Consider the following 421-residue polypeptide: Methionine aminopeptidase 2 (421 aa).

The disordered stretch occupies residues 1-53 (MTDAEIENSPASDLKELNLENEGVEQQDQAKADESDPVESKKKKNKKKKKKKS). A compositionally biased stretch (basic and acidic residues) spans 28–40 (DQAKADESDPVES). Phosphoserine is present on S35. The segment covering 41 to 53 (KKKKNKKKKKKKS) has biased composition (basic residues). H174 is a substrate binding site. The a divalent metal cation site is built by D194, D205, and H274. H282 contacts substrate. 2 residues coordinate a divalent metal cation: E307 and E402.

The protein belongs to the peptidase M24A family. Methionine aminopeptidase eukaryotic type 2 subfamily. The cofactor is Co(2+). Requires Zn(2+) as cofactor. Mn(2+) is required as a cofactor. Fe(2+) serves as cofactor.

It is found in the cytoplasm. The catalysed reaction is Release of N-terminal amino acids, preferentially methionine, from peptides and arylamides.. Functionally, cotranslationally removes the N-terminal methionine from nascent proteins. The N-terminal methionine is often cleaved when the second residue in the primary sequence is small and uncharged (Met-Ala-, Cys, Gly, Pro, Ser, Thr, or Val). The chain is Methionine aminopeptidase 2 from Saccharomyces cerevisiae (strain RM11-1a) (Baker's yeast).